We begin with the raw amino-acid sequence, 122 residues long: AGEVEKREGMMKQIGGSMGALAAISKGQKPYDAEAVKAAVTTISTNAKAFPDQFPPGSETGSAAAPAIWENFDDFKSKAAKLGADADKVLASLPADQAGVTAAMQTLGADCGACHQTYRLKK.

Residues Met-11, Cys-111, Cys-114, and His-115 each contribute to the heme site. The heme c site is built by Met-11, Cys-111, Cys-114, and His-115.

As to quaternary structure, monomer. In terms of processing, binds 1 heme c group covalently per subunit.

In terms of biological role, low-spin monoheme cytochrome c. In Agrobacterium tumefaciens (strain II Chrys), this protein is Cytochrome c-556.